Reading from the N-terminus, the 99-residue chain is Nucleoid-associated protein UPA3_0088 (99 aa).

The protein belongs to the YbaB/EbfC family. As to quaternary structure, homodimer.

It is found in the cytoplasm. It localises to the nucleoid. Functionally, binds to DNA and alters its conformation. May be involved in regulation of gene expression, nucleoid organization and DNA protection. In Ureaplasma parvum serovar 3 (strain ATCC 27815 / 27 / NCTC 11736), this protein is Nucleoid-associated protein UPA3_0088.